The chain runs to 453 residues: Tol-Pal system protein TolB (453 aa).

The signal sequence occupies residues 1–31 (MINNLSVSMTKVLKIILTIIIILFNTLSILA).

This sequence belongs to the TolB family. The Tol-Pal system is composed of five core proteins: the inner membrane proteins TolA, TolQ and TolR, the periplasmic protein TolB and the outer membrane protein Pal. They form a network linking the inner and outer membranes and the peptidoglycan layer.

Its subcellular location is the periplasm. Part of the Tol-Pal system, which plays a role in outer membrane invagination during cell division and is important for maintaining outer membrane integrity. The chain is Tol-Pal system protein TolB from Orientia tsutsugamushi (strain Boryong) (Rickettsia tsutsugamushi).